Reading from the N-terminus, the 775-residue chain is Coiled-coil domain-containing protein R3HCC1L (775 aa).

Basic and acidic residues-rich tracts occupy residues 1–16 (MQQE…KRPD) and 65–112 (ESQR…KGAE). 2 disordered regions span residues 1-127 (MQQE…HRAP) and 235-262 (LSSD…DISV). The tract at residues 7-27 (RCRVRTKRPDMALYVPKARRG) is EJC-binding motif; may mediate interaction with the EJC. The span at 235 to 247 (LSSDSETAPSSLE) shows a compositional bias: polar residues. Ser-671 is subject to Phosphoserine. A Phosphothreonine modification is found at Thr-695. Positions 734-766 (RSKQSKTEREAELRKLQEARERKRLEAKQREDI) form a coiled coil. Residues 755–775 (RKRLEAKQREDIWEGRDQSVV) are disordered.

As to quaternary structure, may interact with the exon junction complex (EJC) composed at least of CASC3, EIF4A3, MAGOH and RBM8A.

The sequence is that of Coiled-coil domain-containing protein R3HCC1L (R3hcc1l) from Mus musculus (Mouse).